Consider the following 285-residue polypeptide: Acetyl-coenzyme A carboxylase carboxyl transferase subunit beta (285 aa).

In terms of domain architecture, CoA carboxyltransferase N-terminal spans 29-285 (IMTKCPKCKK…ILKIHQEVTK (257 aa)). Zn(2+)-binding residues include Cys-33, Cys-36, Cys-52, and Cys-55. The C4-type zinc finger occupies 33 to 55 (CPKCKKIMYTKELAENLNVCFNC).

The protein belongs to the AccD/PCCB family. In terms of assembly, acetyl-CoA carboxylase is a heterohexamer composed of biotin carboxyl carrier protein (AccB), biotin carboxylase (AccC) and two subunits each of ACCase subunit alpha (AccA) and ACCase subunit beta (AccD). It depends on Zn(2+) as a cofactor.

It localises to the cytoplasm. It catalyses the reaction N(6)-carboxybiotinyl-L-lysyl-[protein] + acetyl-CoA = N(6)-biotinyl-L-lysyl-[protein] + malonyl-CoA. The protein operates within lipid metabolism; malonyl-CoA biosynthesis; malonyl-CoA from acetyl-CoA: step 1/1. In terms of biological role, component of the acetyl coenzyme A carboxylase (ACC) complex. Biotin carboxylase (BC) catalyzes the carboxylation of biotin on its carrier protein (BCCP) and then the CO(2) group is transferred by the transcarboxylase to acetyl-CoA to form malonyl-CoA. The chain is Acetyl-coenzyme A carboxylase carboxyl transferase subunit beta from Staphylococcus aureus (strain MSSA476).